The primary structure comprises 535 residues: Bifunctional purine biosynthesis protein PurH (535 aa).

One can recognise an MGS-like domain in the interval 6 to 151 (TRLPIRRALI…KNHKDVAIVV (146 aa)).

It belongs to the PurH family.

It carries out the reaction (6R)-10-formyltetrahydrofolate + 5-amino-1-(5-phospho-beta-D-ribosyl)imidazole-4-carboxamide = 5-formamido-1-(5-phospho-D-ribosyl)imidazole-4-carboxamide + (6S)-5,6,7,8-tetrahydrofolate. The catalysed reaction is IMP + H2O = 5-formamido-1-(5-phospho-D-ribosyl)imidazole-4-carboxamide. It participates in purine metabolism; IMP biosynthesis via de novo pathway; 5-formamido-1-(5-phospho-D-ribosyl)imidazole-4-carboxamide from 5-amino-1-(5-phospho-D-ribosyl)imidazole-4-carboxamide (10-formyl THF route): step 1/1. It functions in the pathway purine metabolism; IMP biosynthesis via de novo pathway; IMP from 5-formamido-1-(5-phospho-D-ribosyl)imidazole-4-carboxamide: step 1/1. The polypeptide is Bifunctional purine biosynthesis protein PurH (Pseudomonas aeruginosa (strain LESB58)).